The sequence spans 149 residues: Large ribosomal subunit protein bL9 (149 aa).

Belongs to the bacterial ribosomal protein bL9 family.

Binds to the 23S rRNA. In Syntrophus aciditrophicus (strain SB), this protein is Large ribosomal subunit protein bL9.